The following is a 378-amino-acid chain: Protein RecA (378 aa).

Position 79-86 (79-86 (GPESSGKT)) interacts with ATP.

The protein belongs to the RecA family.

It is found in the cytoplasm. Its function is as follows. Can catalyze the hydrolysis of ATP in the presence of single-stranded DNA, the ATP-dependent uptake of single-stranded DNA by duplex DNA, and the ATP-dependent hybridization of homologous single-stranded DNAs. It interacts with LexA causing its activation and leading to its autocatalytic cleavage. This chain is Protein RecA, found in Streptococcus pyogenes serotype M1.